Consider the following 103-residue polypeptide: Integration host factor subunit beta (103 aa).

The protein belongs to the bacterial histone-like protein family. Heterodimer of an alpha and a beta chain.

Functionally, this protein is one of the two subunits of integration host factor, a specific DNA-binding protein that functions in genetic recombination as well as in transcriptional and translational control. This is Integration host factor subunit beta from Bradyrhizobium sp. (strain BTAi1 / ATCC BAA-1182).